The chain runs to 100 residues: Small ribosomal subunit protein bS18c (100 aa).

A disordered region spans residues 81–100 (KQFERTESTPRTTGPRTRKK). Positions 89 to 100 (TPRTTGPRTRKK) are enriched in low complexity.

The protein belongs to the bacterial ribosomal protein bS18 family. Part of the 30S ribosomal subunit.

The protein localises to the plastid. It is found in the chloroplast. In Nandina domestica (Heavenly bamboo), this protein is Small ribosomal subunit protein bS18c.